Here is a 344-residue protein sequence, read N- to C-terminus: D-amino-acid oxidase (344 aa).

The FAD site is built by Ala-11, Ser-14, Ser-49, Gly-53, Asn-55, and Ile-167. (R)-lactate is bound by residues Tyr-229 and Arg-290. The anthranilate site is built by Tyr-229 and Arg-290. FAD is bound by residues Arg-290, Ser-321, Gly-324, Tyr-325, and Gln-326.

Belongs to the DAMOX/DASOX family. FAD serves as cofactor.

The protein resides in the peroxisome. The catalysed reaction is a D-alpha-amino acid + O2 + H2O = a 2-oxocarboxylate + H2O2 + NH4(+). It catalyses the reaction D-alanine + O2 + H2O = pyruvate + H2O2 + NH4(+). Catalyzes the oxidative deamination of D-amino acids with broad substrate specificity. Enables the organism to utilize D-amino acids as a source of nutrients. Enables the organism to utilize D-alanine as a source of nitrogen. This Komagataella phaffii (strain GS115 / ATCC 20864) (Yeast) protein is D-amino-acid oxidase.